A 94-amino-acid polypeptide reads, in one-letter code: PTS system galactitol-specific EIIB component (94 aa).

Positions M1–G94 constitute a PTS EIIB type-2 domain. The Phosphocysteine intermediate; for EIIB activity role is filled by C9. Position 9 is a phosphocysteine; by EIIA (C9).

In terms of assembly, forms a complex with one each of subunit of GatA, GatB and 2 subunits of GatC.

The protein resides in the cytoplasm. It carries out the reaction galactitol(out) + N(pros)-phospho-L-histidyl-[protein] = galactitol 1-phosphate(in) + L-histidyl-[protein]. Its function is as follows. The phosphoenolpyruvate-dependent sugar phosphotransferase system (PTS), a major carbohydrate active transport system, catalyzes the phosphorylation of incoming sugar substrates concomitant with their translocation across the cell membrane. The enzyme II complex composed of GatA, GatB and GatC is involved in galactitol transport. It can also use D-glucitol. The polypeptide is PTS system galactitol-specific EIIB component (Escherichia coli (strain K12)).